The chain runs to 736 residues: Polyphosphate kinase (736 aa).

ATP is bound at residue Asn-91. Positions 421 and 451 each coordinate Mg(2+). The active-site Phosphohistidine intermediate is the His-481. ATP contacts are provided by Tyr-514, Arg-610, and His-638.

The protein belongs to the polyphosphate kinase 1 (PPK1) family. Mg(2+) serves as cofactor. An intermediate of this reaction is the autophosphorylated ppk in which a phosphate is covalently linked to a histidine residue through a N-P bond.

The catalysed reaction is [phosphate](n) + ATP = [phosphate](n+1) + ADP. In terms of biological role, catalyzes the reversible transfer of the terminal phosphate of ATP to form a long-chain polyphosphate (polyP). This is Polyphosphate kinase from Pseudomonas syringae pv. tomato (strain ATCC BAA-871 / DC3000).